Reading from the N-terminus, the 790-residue chain is AMP deaminase (790 aa).

Positions 1-14 (MSTPLRGSSPQVSF) are enriched in polar residues. Residues 1-26 (MSTPLRGSSPQVSFYESELDQEGGSD) form a disordered region. 2 residues coordinate Zn(2+): His221 and His223. Substrate contacts are provided by residues His223 and 292–297 (KFNLKY). His488 is a Zn(2+) binding site. Glu491 is a binding site for substrate. His510 serves as the catalytic Proton acceptor. Residue Asp565 coordinates Zn(2+). A substrate-binding site is contributed by 566 to 569 (DPLQ). Disordered regions lie at residues 698–726 (NKLR…SSPG) and 739–790 (PPPL…KSDK). 2 stretches are compositionally biased toward low complexity: residues 706–726 (GSTP…SSPG) and 750–781 (NNNN…TTTN).

Belongs to the metallo-dependent hydrolases superfamily. Adenosine and AMP deaminases family. Homodimer. Zn(2+) serves as cofactor.

It localises to the cytoplasm. The enzyme catalyses AMP + H2O + H(+) = IMP + NH4(+). It functions in the pathway purine metabolism; IMP biosynthesis via salvage pathway; IMP from AMP: step 1/1. Activated by ATP, inhibited by GTP, EDTA and inorganic phosphate. Catalyzes the conversion of adenosine monophosphate (AMP) to inosine monophosphate (IMP) and ammonia (NH4(+)). Participates in the regulation of the adenylated nucleotide pool and the interconversion to guanylated nucleotides during early morphodifferentiation. The polypeptide is AMP deaminase (amdA) (Dictyostelium discoideum (Social amoeba)).